A 423-amino-acid chain; its full sequence is 26S proteasome regulatory subunit 6B homolog (423 aa).

207-214 contacts ATP; that stretch reads GPPGTGKT.

Belongs to the AAA ATPase family.

The protein localises to the cytoplasm. It localises to the nucleus. In terms of biological role, the 26S proteasome is involved in the ATP-dependent degradation of ubiquitinated proteins. The regulatory (or ATPase) complex confers ATP dependency and substrate specificity to the 26S complex. This chain is 26S proteasome regulatory subunit 6B homolog (tbpA), found in Aspergillus niger.